The primary structure comprises 347 residues: N-acetyl-gamma-glutamyl-phosphate reductase (347 aa).

Residue cysteine 152 is part of the active site.

This sequence belongs to the NAGSA dehydrogenase family. Type 1 subfamily.

The protein resides in the cytoplasm. The catalysed reaction is N-acetyl-L-glutamate 5-semialdehyde + phosphate + NADP(+) = N-acetyl-L-glutamyl 5-phosphate + NADPH + H(+). Its pathway is amino-acid biosynthesis; L-arginine biosynthesis; N(2)-acetyl-L-ornithine from L-glutamate: step 3/4. In terms of biological role, catalyzes the NADPH-dependent reduction of N-acetyl-5-glutamyl phosphate to yield N-acetyl-L-glutamate 5-semialdehyde. The sequence is that of N-acetyl-gamma-glutamyl-phosphate reductase from Neisseria gonorrhoeae (strain ATCC 700825 / FA 1090).